The sequence spans 276 residues: MQTIIDAWFVQGMIKATSDAWLKGWDERNGGNLTLRLDEADIEPYAADFHAKPRYIALSQPMPTLANQPFIVTGSGKFFRNVQLDPAANLGVVKVDSDGAGYHILWGLTEDAVPTSELPAHFLSHSERIKLTGGKDRVIMHCHATNLIALTYVLENHSDLFTRKLWEGSTECLVVFPDGVGILPWMVPGTDEIGQATAETMQKHSLVLWPFHGVFGSGPTLDETFGLIDTAEKSAEVLVKVLSMGGMKQTITRDELIALGKRFNVQPLQSALDLYP.

The active site involves Glu-117. 3 residues coordinate Zn(2+): His-141, His-143, and His-212.

The protein belongs to the aldolase class II family. RhaD subfamily. In terms of assembly, homotetramer. It depends on Zn(2+) as a cofactor.

The protein localises to the cytoplasm. It catalyses the reaction L-rhamnulose 1-phosphate = (S)-lactaldehyde + dihydroxyacetone phosphate. It participates in carbohydrate degradation; L-rhamnose degradation; glycerone phosphate from L-rhamnose: step 3/3. In terms of biological role, catalyzes the reversible cleavage of L-rhamnulose-1-phosphate to dihydroxyacetone phosphate (DHAP) and L-lactaldehyde. This Klebsiella pneumoniae subsp. pneumoniae (strain ATCC 700721 / MGH 78578) protein is Rhamnulose-1-phosphate aldolase.